The primary structure comprises 194 residues: Probable RNA 2'-phosphotransferase (194 aa).

The protein belongs to the KptA/TPT1 family.

Functionally, removes the 2'-phosphate from RNA via an intermediate in which the phosphate is ADP-ribosylated by NAD followed by a presumed transesterification to release the RNA and generate ADP-ribose 1''-2''-cyclic phosphate (APPR&gt;P). May function as an ADP-ribosylase. This Burkholderia lata (strain ATCC 17760 / DSM 23089 / LMG 22485 / NCIMB 9086 / R18194 / 383) protein is Probable RNA 2'-phosphotransferase.